Consider the following 595-residue polypeptide: MSQNDTNHESVEEAVFKYVGVGLEKSGEDDAVNKQKSVDWFLKEQDQDQDQDQDPGRDQDQEDNAKHRDANDVSAVAAAAVAAALSVKKRGRPSEQSSTGSSGKGSGSSGQNNKKSKKNKNKLHLAAVDPELASLDDNLVDGNDSEEQSHHQLVHKAIMDTDNIASQHPDFQQYLNTEDDQEPKKEKSEERSYGDLSNIDDHVDDVSVSGSIPSQVRLKKTAEVLPKVLSSESHNDDQQDDVSNLIQEAAAKASHIINPATQSNGKSFDESEEEALEQFIKEYQKIRGLSRRQICERIWSNERRKDDFWTNICRVLPYRTRSSIYKHVRRKYHIFEQRGKWTPEEDAELARWCAEKEGQWSNIGKVLGRMPEDCRDRWRNYVKCGPNRAANKWSVEEEEKLKNVIHQMLDNASTAYEDGEDDEMKDSSTKIEDSGDADMLDVQDSDKKPSISNSKKKPAAKDIINWTVVSEQMGGSRSRIQCRYKWNKLLKKEALNKIKNISDDDKFWLLTKLRDMGFTEDSQVDWEELSTLMPGRRWTGTELKLLYEKVRTTVRQYKRKTINVICKELVGYPEASLPLDDEIRQHHSGDDEDKD.

Basic and acidic residues-rich tracts occupy residues 25 to 46 and 54 to 71; these read KSGE…KEQD and DPGR…RDAN. A disordered region spans residues 25-208; sequence KSGEDDAVNK…IDDHVDDVSV (184 aa). Low complexity predominate over residues 75-84; sequence AVAAAAVAAA. The segment covering 114–123 has biased composition (basic residues); it reads KKSKKNKNKL. Over residues 163 to 176 the composition is skewed to polar residues; the sequence is NIASQHPDFQQYLN. The segment covering 182-205 has biased composition (basic and acidic residues); it reads EPKKEKSEERSYGDLSNIDDHVDD. The HTH myb-type domain maps to 333-384; sequence HIFEQRGKWTPEEDAELARWCAEKEGQWSNIGKVLGRMPEDCRDRWRNYVKC. Residues 360–382 constitute a DNA-binding region (H-T-H motif); it reads WSNIGKVLGRMPEDCRDRWRNYV. The 106-residue stretch at 385–490 folds into the Myb-like domain; sequence GPNRAANKWS…QCRYKWNKLL (106 aa). The segment at 414 to 456 is disordered; that stretch reads TAYEDGEDDEMKDSSTKIEDSGDADMLDVQDSDKKPSISNSKK. Positions 434–443 are enriched in acidic residues; the sequence is SGDADMLDVQ.

The protein resides in the nucleus. In terms of biological role, DNA-binding protein that recognizes sites within both the enhancer and the promoter of rRNA transcription, as well as upstream of many genes transcribed by RNA polymerase II. It is essential for cell growth. May stimulate or inhibit transcription. Specifically recognizes the sequence 5'-CCGGGTA-3' or 5'-CGGGTRR-3' (where R is any purine). This Kluyveromyces lactis (strain ATCC 8585 / CBS 2359 / DSM 70799 / NBRC 1267 / NRRL Y-1140 / WM37) (Yeast) protein is DNA-binding protein REB1 (REB1).